Here is a 997-residue protein sequence, read N- to C-terminus: Malignant fibrous histiocytoma-amplified sequence 1 homolog (997 aa).

14 LRR repeats span residues 32–53 (SLRQ…ADLG), 54–76 (DVEV…QSLS), 79–100 (NLHV…VYHL), 102–123 (RLTE…VGLL), 125–146 (KLKK…LGML), 148–170 (DLEE…QGLP), 171–192 (SLRT…LFHV), 194–216 (ALEE…IRSM), 218–239 (SLKI…ICEL), 241–262 (NLES…FGAL), 264–286 (KLKM…LQLV), 287–308 (DLEE…ISCM), 310–331 (KLVT…IVEL), and 333–354 (FLEE…FGKL). Residues 393 to 626 (QPAVKPRLKL…EKLLSVAEHR (234 aa)) enclose the Roc domain. The 225-residue stretch at 637 to 861 (PKSWQMLEEL…RFSVQINSHI (225 aa)) folds into the COR domain.

Its subcellular location is the cytoplasm. In terms of biological role, probable GTP-binding protein. Functions in innate immunity and more specifically the inflammatory response as a regulator of the Toll-like receptor TLR2 and TLR4 signaling pathways. The protein is Malignant fibrous histiocytoma-amplified sequence 1 homolog (mfhas1) of Xenopus tropicalis (Western clawed frog).